The primary structure comprises 842 residues: Non-motile and phage-resistance protein (842 aa).

The next 3 helical transmembrane spans lie at 29 to 50 (VFVR…AFGV), 283 to 303 (GAFS…LLMI), and 343 to 363 (VYLS…VVSG). Positions 318 to 389 (SERRFRLAVE…QALANAAMYG (72 aa)) constitute a PAS domain. The Histidine kinase domain occupies 607–830 (NMSHELRTPL…TVSFTLPVRH (224 aa)). His610 carries the post-translational modification Phosphohistidine; by autocatalysis.

It localises to the cell membrane. It carries out the reaction ATP + protein L-histidine = ADP + protein N-phospho-L-histidine.. In terms of biological role, member of the two-component regulatory system involved in the regulation of polar organelle development. PleC functions as a membrane-associated protein kinase that transfers phosphate to the response regulator PleD, leading to its activation. The chain is Non-motile and phage-resistance protein (pleC) from Caulobacter vibrioides (strain ATCC 19089 / CIP 103742 / CB 15) (Caulobacter crescentus).